A 163-amino-acid chain; its full sequence is MRIEKCYFCSGPIYPGHGMMFVRNDCKVFRFCKSKCHKNFKKKRNPRKVRWTKAFRKAAGKELTVDNSFEFEKRRNEPVKYQRELWNKTIDAMKRVEEIKQKRQAKFIMNRLKKNKELQKVQDVKEVKQNIHLIRAPLAGKGKQLEDKMVQKLQEDVDMEDVS.

The protein belongs to the eukaryotic ribosomal protein eL24 family. In terms of assembly, associated with nucleolar and cytoplasmic pre-60S particles. At the end of biogenesis it dissociates from cytoplasmic pre-60S particles and is likely to be exchanged for its ribosomal homolog, RPL24.

The protein resides in the nucleus. Its subcellular location is the nucleolus. Its function is as follows. Involved in the biogenesis of the 60S ribosomal subunit. Ensures the docking of GTPBP4/NOG1 to pre-60S particles. In Bos taurus (Bovine), this protein is Probable ribosome biogenesis protein RLP24 (RSL24D1).